The sequence spans 316 residues: MANYGDPNLKVFTLNSNKGLAYEITERIGVPMGKSSVTRFSDGEVQINIEESIRGCDVFLIQSTAAPANEHIMELLIMIDAVKRASAKTINVVIPYYGYARQDRKARAREPITAKLVANLLETAGATRVLTLDLHATQIQGFFDIPVDQLMGVPILAEFFEKKGLDDVVVVSPDHGGVVRARKLADRLKAPIAIIDKRRPKPNVAEVMNIVGHIEGKTAIIIDDIIDTAGTITLAANALVEHGAKEVYACCTHPVLSGPAIERIKNSKIKELVVMNTIELEEEKLIDKITTLSVAPLMAEAIVRVHEHSSVSLLFD.

ATP contacts are provided by residues 42–44 and 101–102; these read DGE and RQ. Mg(2+)-binding residues include histidine 135 and aspartate 174. Lysine 197 is an active-site residue. D-ribose 5-phosphate-binding positions include arginine 199, aspartate 223, and 227 to 231; that span reads DTAGT.

The protein belongs to the ribose-phosphate pyrophosphokinase family. Class I subfamily. In terms of assembly, homohexamer. Mg(2+) is required as a cofactor.

The protein resides in the cytoplasm. It carries out the reaction D-ribose 5-phosphate + ATP = 5-phospho-alpha-D-ribose 1-diphosphate + AMP + H(+). It participates in metabolic intermediate biosynthesis; 5-phospho-alpha-D-ribose 1-diphosphate biosynthesis; 5-phospho-alpha-D-ribose 1-diphosphate from D-ribose 5-phosphate (route I): step 1/1. Functionally, involved in the biosynthesis of the central metabolite phospho-alpha-D-ribosyl-1-pyrophosphate (PRPP) via the transfer of pyrophosphoryl group from ATP to 1-hydroxyl of ribose-5-phosphate (Rib-5-P). The chain is Ribose-phosphate pyrophosphokinase from Halalkalibacterium halodurans (strain ATCC BAA-125 / DSM 18197 / FERM 7344 / JCM 9153 / C-125) (Bacillus halodurans).